The primary structure comprises 96 residues: MLASVLILGAIAVGSAIPTIAELKVDRSLCRKSPMEEFYVFENGEWVKKEELADWWLCIDVDSIERSDYYSAAKKAIELQKLGRDSPYYGGEWIGC.

The first 21 residues, 1–21 (MLASVLILGAIAVGSAIPTIA), serve as a signal peptide directing secretion.

This is an uncharacterized protein from Archaeoglobus fulgidus (strain ATCC 49558 / DSM 4304 / JCM 9628 / NBRC 100126 / VC-16).